The following is a 432-amino-acid chain: G-protein coupled receptor 22 (432 aa).

Residues 1–45 (MCFSPVLEINMQSESNVTVRDDIEDIDTNMYQPLSYPLSFQVSLT) lie on the Cytoplasmic side of the membrane. A helical membrane pass occupies residues 46–66 (GFLMLEIVLGLGSNLTVLVLY). Residues 67 to 85 (CMKSNLISSVSNIITMNLH) lie on the Extracellular side of the membrane. The helical transmembrane segment at 86 to 106 (VLDVIICVGCIPLTIVILLLS) threads the bilayer. The Cytoplasmic portion of the chain corresponds to 107–115 (LERNTALIC). Residues 116–136 (CFHEACVSFASVSTAINVFAI) form a helical membrane-spanning segment. Residues 137 to 156 (TLDRYDISVKPANRILTMGR) are Extracellular-facing. A helical membrane pass occupies residues 157-177 (AVMLMTSIWIFSFFSFLIPFI). The Cytoplasmic portion of the chain corresponds to 178–208 (EVNFFSLQSGNAWENKTLLCVSTSEYYTELG). Residues 209 to 229 (MYYHLLVQIPIFFFTVIVMLI) form a helical membrane-spanning segment. Over 230–314 (TYTKILQALN…ERQKRVFKMS (85 aa)) the chain is Extracellular. A helical membrane pass occupies residues 315–335 (LLIISTFLLCWTPISVLNTTI). Over 336 to 348 (LCLGPSDLLVKLR) the chain is Cytoplasmic. Residues 349-369 (LCFLVMAYGTTIFHPLLYAFT) traverse the membrane as a helical segment. The Extracellular portion of the chain corresponds to 370 to 432 (RQKFQKVLKS…KCLVPQVVTD (63 aa)).

It belongs to the G-protein coupled receptor 1 family. As to expression, abundant levels detected in the brain. High expression in the heart (at protein level). No detectable expression in other peripheral tissues.

Its subcellular location is the cell membrane. Orphan G-protein coupled receptor. Seems to act through a G(i)/G(o) mediated pathway. May be involved in ciliogenesis. The chain is G-protein coupled receptor 22 from Rattus norvegicus (Rat).